We begin with the raw amino-acid sequence, 210 residues long: Large ribosomal subunit protein uL3 (210 aa).

The disordered stretch occupies residues 125 to 151 (HGFGGGPRTHGQSDRLRAPGSIGAGTD).

This sequence belongs to the universal ribosomal protein uL3 family. As to quaternary structure, part of the 50S ribosomal subunit. Forms a cluster with proteins L14 and L19.

In terms of biological role, one of the primary rRNA binding proteins, it binds directly near the 3'-end of the 23S rRNA, where it nucleates assembly of the 50S subunit. This chain is Large ribosomal subunit protein uL3, found in Roseiflexus sp. (strain RS-1).